The chain runs to 183 residues: MHAIAENHGVKASYTKEELQACGQGRLFGEGAAKLPVDQMLMVDRVSQISAEGGAYGHGIVRAQLDINPDLWFFKCHFVGDPVMPGCLGLDAMWQLVGFFLAWKGHKGLGRALGVGEVKFTGQVLPSAKSVEYVLDIKRVIARKLIMALADGTVYVDGKAIYTAKDLRVGLFDPAAMSGAEIK.

Histidine 77 is an active-site residue.

It belongs to the thioester dehydratase family. FabA subfamily. As to quaternary structure, homodimer.

It is found in the cytoplasm. The catalysed reaction is a (3R)-hydroxyacyl-[ACP] = a (2E)-enoyl-[ACP] + H2O. It carries out the reaction (3R)-hydroxydecanoyl-[ACP] = (2E)-decenoyl-[ACP] + H2O. The enzyme catalyses (2E)-decenoyl-[ACP] = (3Z)-decenoyl-[ACP]. Its pathway is lipid metabolism; fatty acid biosynthesis. Its function is as follows. Necessary for the introduction of cis unsaturation into fatty acids. Catalyzes the dehydration of (3R)-3-hydroxydecanoyl-ACP to E-(2)-decenoyl-ACP and then its isomerization to Z-(3)-decenoyl-ACP. Can catalyze the dehydratase reaction for beta-hydroxyacyl-ACPs with saturated chain lengths up to 16:0, being most active on intermediate chain length. This Hahella chejuensis (strain KCTC 2396) protein is 3-hydroxydecanoyl-[acyl-carrier-protein] dehydratase.